Reading from the N-terminus, the 156-residue chain is Ribosomal RNA large subunit methyltransferase H (156 aa).

Residues L73, G104, and 123-128 (VSSLTL) contribute to the S-adenosyl-L-methionine site.

It belongs to the RNA methyltransferase RlmH family. As to quaternary structure, homodimer.

It localises to the cytoplasm. It carries out the reaction pseudouridine(1915) in 23S rRNA + S-adenosyl-L-methionine = N(3)-methylpseudouridine(1915) in 23S rRNA + S-adenosyl-L-homocysteine + H(+). In terms of biological role, specifically methylates the pseudouridine at position 1915 (m3Psi1915) in 23S rRNA. This is Ribosomal RNA large subunit methyltransferase H from Paraburkholderia phymatum (strain DSM 17167 / CIP 108236 / LMG 21445 / STM815) (Burkholderia phymatum).